The chain runs to 412 residues: Argininosuccinate synthase (412 aa).

Residues 10–18 (AYSGGLDTS) and Ala36 contribute to the ATP site. Residues Tyr87 and Ser92 each contribute to the L-citrulline site. Position 87 is a phosphotyrosine (Tyr87). N6-acetyllysine is present on Lys112. Position 113 is a phosphotyrosine (Tyr113). Residue 115 to 123 (SHGATGKGN) coordinates ATP. L-aspartate is bound by residues Thr119, Asn123, and Asp124. Asn123 serves as a coordination point for L-citrulline. An L-citrulline-binding site is contributed by Arg127. N6-acetyllysine; by CLOCK occurs at positions 165 and 176. 2 positions are modified to phosphoserine: Ser177 and Ser180. Positions 180 and 189 each coordinate L-citrulline. Ser219 carries the phosphoserine modification. L-citrulline-binding residues include Glu270 and Tyr282.

It belongs to the argininosuccinate synthase family. Type 1 subfamily. In terms of assembly, homotetramer. Interacts with NMRAL1. Interacts with CLOCK; in a circadian manner. Forms tissue-specific complexes with ASL, SLC7A1, HSP90AA1 and nitric oxide synthase NOS1, NOS2 or NOS3; the complex regulates cell-autonomous L-arginine synthesis and citrulline recycling while channeling extracellular L-arginine to nitric oxide synthesis pathway. In terms of processing, acetylated by CLOCK in a circadian manner which negatively regulates its enzyme activity. Deacetylated by histone deacetylases. In terms of tissue distribution, widely expressed.

The protein localises to the cytoplasm. It localises to the cytosol. It carries out the reaction L-citrulline + L-aspartate + ATP = 2-(N(omega)-L-arginino)succinate + AMP + diphosphate + H(+). The protein operates within amino-acid biosynthesis; L-arginine biosynthesis; L-arginine from L-ornithine and carbamoyl phosphate: step 2/3. It participates in nitrogen metabolism; urea cycle; (N(omega)-L-arginino)succinate from L-aspartate and L-citrulline: step 1/1. In terms of biological role, one of the enzymes of the urea cycle, the metabolic pathway transforming neurotoxic amonia produced by protein catabolism into inocuous urea in the liver of ureotelic animals. Catalyzes the formation of arginosuccinate from aspartate, citrulline and ATP and together with ASL it is responsible for the biosynthesis of arginine in most body tissues. The chain is Argininosuccinate synthase from Mus musculus (Mouse).